A 67-amino-acid polypeptide reads, in one-letter code: Bowman-Birk type proteinase inhibitor A6 (67 aa).

6 disulfide bridges follow: cysteine 9–cysteine 66, cysteine 10–cysteine 29, cysteine 13–cysteine 62, cysteine 16–cysteine 27, cysteine 36–cysteine 43, and cysteine 40–cysteine 54.

Belongs to the Bowman-Birk serine protease inhibitor family. Expressed in bulb (at protein level).

In terms of biological role, serine protease inhibitor. Strongly inhibits trypsin (Ki = 4 nM) and elastase (Ki = 4.8 nM). Also inhibits chymotrypsin with a Ki of 22 nM. Does not inhibit bacterial subtilisin. This Hyacinthus orientalis (Common hyacinth) protein is Bowman-Birk type proteinase inhibitor A6.